A 100-amino-acid chain; its full sequence is Defensin-6 (100 aa).

Positions 1–19 (MRTLTILTAVLLVALQAKA) are cleaved as a signal peptide. The propeptide occupies 20–68 (EPLQAEDEPLQAKAYEADAQEQRGANDQDFAVSFAEDASSSLRALGSTR). 3 cysteine pairs are disulfide-bonded: cysteine 72-cysteine 99, cysteine 74-cysteine 88, and cysteine 78-cysteine 98.

This sequence belongs to the alpha-defensin family. As to quaternary structure, homodimer. Self-assembles into higher-order oligomers termed nanonets, fibril-like structures that entrap microbes. Self-assembly into nanonets seems to protect against proteolytic digestion in duodenal fluid. Interacts with Y.enterocolitica invasin and S.typhimurium fliC/flagellim; the interaction creates an anchoring site for progressive DEFA6 self-assembly into nanonets. In terms of processing, proteolytically cleaved by trypsin at Arg-68; the propeptide is stored in the tissue of the small intestine and the mature peptide is found in the luminal fluid; cleavage may occur during or after release into the lumen. The N-terminal propeptide region suppresses self-assembly and renders DEFA6 propeptide unable to agglutinate bacteria and protect human epithelial cells from bacterial invasion. Under reducing conditions, naturally present in the gut owing to the low redox potential or enzymatically generated by the thioredoxin system, the disulfide bridges are opened leading to a conformational change of DEF6, thereby changing its antimicrobial spectrum. The reduced form exhibits inhibitory activity against anaerobic bacteria, in contrast to the minimal antimicrobial activity of the disulfide-linked oxidized form. The formation of higher-order nanonets and bacterial entrapment is independent of the redox state.

It is found in the secreted. Its subcellular location is the cytoplasmic vesicle. It localises to the secretory vesicle. Functionally, host-defense peptide that contributes to intestinal innate immunity and mediates homeostasis at mucosal surfaces by forming higher-order oligomers that capture bacteria and prevent microbial invasion of the epithelium. After binding to bacterial surface proteins, undergoes ordered self-assembly to form fibril-like nanonets that surround and entangle bacteria and thereby prevent bacterial invasion across the epithelial barrier. Entangles and agglutinates Gram-negative bacteria, such as E.coli, S.typhimurium and Y.enterocolitica, and Gram-positive bacteria such as L.monocytogenes, thereby protecting the intestine against invasion by enteric bacterial pathogens. Blocks adhesion of C.albicans to intestinal epithelial cells and thereby suppresses fungal invasion of epithelial cells and biofilm formation. Under reducing conditions and in an acidic environment similar to the intestinal milieu, exhibits inhibitory activity against anaerobic bacteria such as B.adolescentis, L.acidophilus, and B.breve, as well as B.longum and S.thermophilus, possibly by leading to alterations in bacterial cell envelope structures. The disulfide-linked oxidized form exhibits negligible antimicrobial activity against Gram-negative and Gram-positive bacteria, as compared to the enteric defensin DEFA5. This is Defensin-6 (DEFA6) from Pan troglodytes (Chimpanzee).